Consider the following 398-residue polypeptide: Bone morphogenetic protein 2-B (398 aa).

Positions 1 to 23 (MVAGIHSLLLLQFYQILLSGCTG) are cleaved as a signal peptide. A propeptide spanning residues 24-284 (LVPEEGKRKY…GHALHKRQKR (261 aa)) is cleaved from the precursor. 4 N-linked (GlcNAc...) asparagine glycosylation sites follow: asparagine 137, asparagine 202, asparagine 237, and asparagine 340. Disulfide bonds link cysteine 298/cysteine 363, cysteine 327/cysteine 395, and cysteine 331/cysteine 397.

Belongs to the TGF-beta family. In terms of assembly, homodimer; disulfide-linked.

Its subcellular location is the secreted. Induces cartilage and bone formation. This Xenopus laevis (African clawed frog) protein is Bone morphogenetic protein 2-B (bmp2-b).